The sequence spans 141 residues: NADH-quinone oxidoreductase subunit A (141 aa).

3 helical membrane-spanning segments follow: residues 24–44 (LLALALYVALACIIVVSLLLA), 77–97 (VPFYLTAIFFVVFDVEVAFIA), and 106–126 (LGWAGLAQIAFFIITLLVALI).

Belongs to the complex I subunit 3 family. NDH-1 is composed of 14 different subunits. Subunits NuoA, H, J, K, L, M, N constitute the membrane sector of the complex.

It is found in the cell inner membrane. It catalyses the reaction a quinone + NADH + 5 H(+)(in) = a quinol + NAD(+) + 4 H(+)(out). NDH-1 shuttles electrons from NADH, via FMN and iron-sulfur (Fe-S) centers, to quinones in the respiratory chain. The immediate electron acceptor for the enzyme in this species is believed to be ubiquinone. Couples the redox reaction to proton translocation (for every two electrons transferred, four hydrogen ions are translocated across the cytoplasmic membrane), and thus conserves the redox energy in a proton gradient. In Syntrophotalea carbinolica (strain DSM 2380 / NBRC 103641 / GraBd1) (Pelobacter carbinolicus), this protein is NADH-quinone oxidoreductase subunit A.